Here is a 90-residue protein sequence, read N- to C-terminus: Probable Fe(2+)-trafficking protein (90 aa).

This sequence belongs to the Fe(2+)-trafficking protein family.

Could be a mediator in iron transactions between iron acquisition and iron-requiring processes, such as synthesis and/or repair of Fe-S clusters in biosynthetic enzymes. The sequence is that of Probable Fe(2+)-trafficking protein from Hydrogenovibrio crunogenus (strain DSM 25203 / XCL-2) (Thiomicrospira crunogena).